Here is a 238-residue protein sequence, read N- to C-terminus: tRNA (guanine-N(7)-)-methyltransferase (238 aa).

S-adenosyl-L-methionine contacts are provided by glutamate 68, glutamate 93, aspartate 120, and aspartate 143. Aspartate 143 is an active-site residue. Residues lysine 147, aspartate 179, and threonine 216–glutamate 219 each bind substrate.

Belongs to the class I-like SAM-binding methyltransferase superfamily. TrmB family.

It catalyses the reaction guanosine(46) in tRNA + S-adenosyl-L-methionine = N(7)-methylguanosine(46) in tRNA + S-adenosyl-L-homocysteine. It participates in tRNA modification; N(7)-methylguanine-tRNA biosynthesis. In terms of biological role, catalyzes the formation of N(7)-methylguanine at position 46 (m7G46) in tRNA. The protein is tRNA (guanine-N(7)-)-methyltransferase of Shewanella woodyi (strain ATCC 51908 / MS32).